Here is a 333-residue protein sequence, read N- to C-terminus: Serine/threonine-protein phosphatase PP1-beta (333 aa).

Mn(2+) contacts are provided by D63, H65, D91, and N123. The Proton donor role is filled by H124. Residues H172 and H247 each coordinate Mn(2+). The segment at 306-333 (GAGGVGSNRPVTPPRNAPAAQPKKGAKK) is disordered. Over residues 322 to 333 (APAAQPKKGAKK) the composition is skewed to low complexity.

The protein belongs to the PPP phosphatase family. PP-1 subfamily. As to quaternary structure, interacts with lab-1; the interaction is direct. Interacts with knl-1; the interaction is direct. The cofactor is Mn(2+).

Its subcellular location is the cytoplasm. It localises to the nucleus. The enzyme catalyses O-phospho-L-seryl-[protein] + H2O = L-seryl-[protein] + phosphate. It catalyses the reaction O-phospho-L-threonyl-[protein] + H2O = L-threonyl-[protein] + phosphate. Functionally, serine/threonine-protein phosphatase essential for chromosomal dynamics during meiosis and mitosis. Antagonizes the function of air-2 in the regulation of chromosome cohesion. Dephosphorylates histone H3 at 'Ser-10'. Also involved in the activation of chloride channel clh-3 during cell swelling and meiotic maturation. Essential for embryogenesis. The protein is Serine/threonine-protein phosphatase PP1-beta (gsp-2) of Caenorhabditis briggsae.